The sequence spans 267 residues: Undecaprenyl-diphosphatase (267 aa).

The next 7 helical transmembrane spans lie at 1 to 21, 39 to 59, 85 to 105, 117 to 137, 189 to 209, 220 to 240, and 246 to 266; these read MTLW…FLPI, AGVA…LFYY, AKLG…GFMV, LLIA…DFWG, FSFL…LWKL, LIAL…ALFI, and VGMM…FFVF.

This sequence belongs to the UppP family.

It localises to the cell inner membrane. The enzyme catalyses di-trans,octa-cis-undecaprenyl diphosphate + H2O = di-trans,octa-cis-undecaprenyl phosphate + phosphate + H(+). Catalyzes the dephosphorylation of undecaprenyl diphosphate (UPP). Confers resistance to bacitracin. The protein is Undecaprenyl-diphosphatase of Dichelobacter nodosus (strain VCS1703A).